Reading from the N-terminus, the 434-residue chain is MSAGTASDTTALNTFFSAQLAETDPEIAKAISQELGRQQHEIELIASENIVSRAVLEAQGSVLTNKYAEGYPGRRYYGGCQFVDIAEELAIDRAKRLFGCGFANVQPNSGSQANQGVFMALMQPGDTFLGLDLAAGGHLTHGAPPNVSGKWFKPVSYTVRREDQRIDMEQVERLAQEHKPKVIIAGGSGYPRHWDFAKFREIADSVGAYFFVDMAHFAGLVAAGLHPSPFPHAHVATTTTHKTLRGPRGGMILTNDEALAKKFNSAIFPGLQGGPLMHVIAAKAVAFGEALKPEFKIYAKQVIDNAKALADTIISGGYDITSGGTDNHLMLVDLQKKGLTGKAAEAALSRADITCNKNGVPFDPQKPTITSGIRLGTPASTTRGFGVAEFKQVGSLIVQVLDGLADKGESGDSTVEAAVKEKVHALTDRFPIYS.

(6S)-5,6,7,8-tetrahydrofolate-binding positions include leucine 133 and 137 to 139 (GHL). Lysine 242 carries the N6-(pyridoxal phosphate)lysine modification.

This sequence belongs to the SHMT family. Homodimer. Requires pyridoxal 5'-phosphate as cofactor.

Its subcellular location is the cytoplasm. The enzyme catalyses (6R)-5,10-methylene-5,6,7,8-tetrahydrofolate + glycine + H2O = (6S)-5,6,7,8-tetrahydrofolate + L-serine. Its pathway is one-carbon metabolism; tetrahydrofolate interconversion. The protein operates within amino-acid biosynthesis; glycine biosynthesis; glycine from L-serine: step 1/1. Catalyzes the reversible interconversion of serine and glycine with tetrahydrofolate (THF) serving as the one-carbon carrier. This reaction serves as the major source of one-carbon groups required for the biosynthesis of purines, thymidylate, methionine, and other important biomolecules. Also exhibits THF-independent aldolase activity toward beta-hydroxyamino acids, producing glycine and aldehydes, via a retro-aldol mechanism. The sequence is that of Serine hydroxymethyltransferase from Methylorubrum populi (strain ATCC BAA-705 / NCIMB 13946 / BJ001) (Methylobacterium populi).